The primary structure comprises 509 residues: ATP synthase subunit alpha (509 aa).

169–176 contacts ATP; that stretch reads GDRQTGKT.

This sequence belongs to the ATPase alpha/beta chains family. In terms of assembly, F-type ATPases have 2 components, CF(1) - the catalytic core - and CF(0) - the membrane proton channel. CF(1) has five subunits: alpha(3), beta(3), gamma(1), delta(1), epsilon(1). CF(0) has three main subunits: a(1), b(2) and c(9-12). The alpha and beta chains form an alternating ring which encloses part of the gamma chain. CF(1) is attached to CF(0) by a central stalk formed by the gamma and epsilon chains, while a peripheral stalk is formed by the delta and b chains.

It localises to the cell inner membrane. The enzyme catalyses ATP + H2O + 4 H(+)(in) = ADP + phosphate + 5 H(+)(out). Its function is as follows. Produces ATP from ADP in the presence of a proton gradient across the membrane. The alpha chain is a regulatory subunit. This Chelativorans sp. (strain BNC1) protein is ATP synthase subunit alpha.